The sequence spans 371 residues: Putative 26S proteasome regulatory subunit homolog MJ1494 (371 aa).

161-168 (GPPGTGKT) lines the ATP pocket.

The protein belongs to the AAA ATPase family.

In terms of biological role, the 26S proteasome is involved in the ATP-dependent degradation of ubiquitinated proteins. The regulatory (or ATPase) complex confers ATP dependency and substrate specificity to the 26S complex. This chain is Putative 26S proteasome regulatory subunit homolog MJ1494, found in Methanocaldococcus jannaschii (strain ATCC 43067 / DSM 2661 / JAL-1 / JCM 10045 / NBRC 100440) (Methanococcus jannaschii).